The sequence spans 966 residues: uncharacterized protein (966 aa).

The first 24 residues, 1-24, serve as a signal peptide directing secretion; the sequence is MQGNLLKVLGVLAIVATLVCFIFA. 6 consecutive transmembrane segments (helical) span residues 601-621, 711-731, 743-763, 785-805, 822-842, and 855-875; these read IKAI…LGFA, LGLS…IVII, AFMA…FLLF, VVMM…LDFV, FIGT…INWF, and GVNM…YGYV. The segment at 918–966 is disordered; that stretch reads TRQGITGRAEARLKQRNKTLDQAEKNRKNTQKEGGEKTNEEPPKPETPK. The span at 926-966 shows a compositional bias: basic and acidic residues; sequence AEARLKQRNKTLDQAEKNRKNTQKEGGEKTNEEPPKPETPK.

Belongs to the TrbL/VirB6 family.

It is found in the cell membrane. This is an uncharacterized protein from Rickettsia conorii (strain ATCC VR-613 / Malish 7).